The following is a 118-amino-acid chain: Mitochondrial protein YPR099C (118 aa).

The protein localises to the mitochondrion. Essential for the functional mitochondria and respiratory growth. The sequence is that of Mitochondrial protein YPR099C from Saccharomyces cerevisiae (strain ATCC 204508 / S288c) (Baker's yeast).